The primary structure comprises 334 residues: E3 ubiquitin-protein ligase CIP8 (334 aa).

Residues 111-158 (LNSRNEIDDDEDEDEDDGDEEEEDEEENLTVNDEEDEEDDLRRRNRFP) form a disordered region. Over residues 117 to 149 (IDDDEDEDEDDGDEEEEDEEENLTVNDEEDEED) the composition is skewed to acidic residues. The RING-type; atypical zinc-finger motif lies at 257-298 (CAVCKDGMVMGETGKKLPCGHCYHGDCIVPWLGTRNSCPVCR). The disordered stretch occupies residues 307–334 (EYEEERKKRTSTVSDSAAASSSSSTSRY). The segment covering 317–334 (STVSDSAAASSSSSTSRY) has biased composition (low complexity).

Interacts with the RING finger of COP1. Interacts with UBC8 through its N-terminal region. In terms of tissue distribution, expressed in both light- and dark-grown seedlings.

It localises to the cytoplasm. It catalyses the reaction S-ubiquitinyl-[E2 ubiquitin-conjugating enzyme]-L-cysteine + [acceptor protein]-L-lysine = [E2 ubiquitin-conjugating enzyme]-L-cysteine + N(6)-ubiquitinyl-[acceptor protein]-L-lysine.. Its pathway is protein modification; protein ubiquitination. Its function is as follows. E3 ubiquitin-protein ligase that mediates ubiquitination and subsequent proteasomal degradation of target proteins. Probably forms a minimal ubiquitin ligase complex in cooperation with the E2 enzyme UBC8. Its interaction with COP1 suggests that it may participate in proteasome-mediated degradation of HY5 in vivo. This Arabidopsis thaliana (Mouse-ear cress) protein is E3 ubiquitin-protein ligase CIP8 (CIP8).